The following is a 259-amino-acid chain: MKWTISCLQFDISYGKPSENIKKAEFFIEKESKHADVLVLPELWTTGYDLANLDELADEDGRSAQSWLKKTAKKHGVHIVAGSVAVRKNSDVYNTMYIADKEGQIIKEYRKAHLFQLMDEHLYLSAGSEDGYFELDGVKSSGLICYDIRFPEWIRKHTTKGANVLFISAEWPLPRLDHWKSLLIARAIENQCFVAACNCTGSNPDNEFAGHSLIIDPWGRVLAEGGREEGIVRAEIDLQESAEVRESIPVFDDIRKDLY.

One can recognise a CN hydrolase domain in the interval 3-238; sequence WTISCLQFDI…EGIVRAEIDL (236 aa). Glu42 acts as the Proton acceptor in catalysis. The active-site Proton donor is the Lys111. The active-site Nucleophile is the Cys145.

It belongs to the carbon-nitrogen hydrolase superfamily. NIT1/NIT2 family.

It carries out the reaction 2-oxoglutaramate + H2O = 2-oxoglutarate + NH4(+). In terms of biological role, involved in the methylthioribose (MTR) recycling pathway. Probably catalyzes the conversion of 2-oxoglutaramate to 2-oxoglutarate. The sequence is that of 2-oxoglutaramate amidase from Bacillus subtilis (strain 168).